Consider the following 157-residue polypeptide: SsrA-binding protein (157 aa).

Positions 133–157 (LHDKRESEKKRDWGREKGRLLRARG) are disordered. Over residues 135-151 (DKRESEKKRDWGREKGR) the composition is skewed to basic and acidic residues.

The protein belongs to the SmpB family.

It localises to the cytoplasm. Required for rescue of stalled ribosomes mediated by trans-translation. Binds to transfer-messenger RNA (tmRNA), required for stable association of tmRNA with ribosomes. tmRNA and SmpB together mimic tRNA shape, replacing the anticodon stem-loop with SmpB. tmRNA is encoded by the ssrA gene; the 2 termini fold to resemble tRNA(Ala) and it encodes a 'tag peptide', a short internal open reading frame. During trans-translation Ala-aminoacylated tmRNA acts like a tRNA, entering the A-site of stalled ribosomes, displacing the stalled mRNA. The ribosome then switches to translate the ORF on the tmRNA; the nascent peptide is terminated with the 'tag peptide' encoded by the tmRNA and targeted for degradation. The ribosome is freed to recommence translation, which seems to be the essential function of trans-translation. The chain is SsrA-binding protein from Bradyrhizobium sp. (strain ORS 278).